Consider the following 260-residue polypeptide: Flap endonuclease Xni (260 aa).

Residue aspartate 112 participates in Mg(2+) binding. In terms of domain architecture, 5'-3' exonuclease spans 168–258; it reads LQPSQLVDFW…FNLKDLRYTP (91 aa). Residues leucine 179, valine 190, and isoleucine 193 each contribute to the K(+) site. The interaction with DNA stretch occupies residues 192-197; it reads GIGEKT.

The protein belongs to the Xni family. It depends on Mg(2+) as a cofactor. Requires K(+) as cofactor.

Has flap endonuclease activity. During DNA replication, flap endonucleases cleave the 5'-overhanging flap structure that is generated by displacement synthesis when DNA polymerase encounters the 5'-end of a downstream Okazaki fragment. This chain is Flap endonuclease Xni, found in Tolumonas auensis (strain DSM 9187 / NBRC 110442 / TA 4).